A 292-amino-acid polypeptide reads, in one-letter code: Arabinose operon regulatory protein (292 aa).

Residues Pro8, Thr24, Arg38, Tyr82, and His93 each coordinate alpha-L-arabinopyanose. Residues 180–279 (REACQYISDH…GASPSEFRAG (100 aa)) enclose the HTH araC/xylS-type domain. DNA-binding regions (H-T-H motif) lie at residues 198-219 (ASVA…RQQL) and 246-269 (IATV…KKCT).

As to quaternary structure, homodimer.

It is found in the cytoplasm. With respect to regulation, arabinose converts the repressor form of AraC to the activator form to regulate the araBAD promoter. In the absence of arabinose, AraC binds to the araO2 and araI1 half-sites in the promoter region of the araBAD operon, leading to the formation of a DNA loop that blocks access of RNA polymerase to the promoter. In the presence of arabinose and the cyclic AMP receptor protein (CRP), it binds to the adjacent half-sites araI1 and araI2, leading to the binding of RNA polymerase to the promoter region and transcription of the araBAD operon. AraI1 acts as a switch mechanism allowing both the repressor and the activator forms of AraC protein to regulate the araBAD promoter. Inhibited by D-fucose, which binds competitively to the same site on the protein. Its function is as follows. Transcription factor that regulates the expression of several genes involved in the transport and metabolism of L-arabinose. Functions both as a positive and a negative regulator. In the presence of arabinose, activates the expression of the araBAD, araE, araFGH and araJ promoters. In the absence of arabinose, negatively regulates the araBAD operon. Represses its own transcription. Acts by binding directly to DNA. This chain is Arabinose operon regulatory protein, found in Escherichia coli (strain K12).